The following is a 521-amino-acid chain: Protein nucleotidyltransferase YdiU (521 aa).

Residues glycine 109, glycine 111, arginine 112, lysine 131, aspartate 143, glycine 144, arginine 194, and arginine 201 each contribute to the ATP site. Aspartate 270 serves as the catalytic Proton acceptor. Mg(2+) is bound by residues asparagine 271 and aspartate 280. Aspartate 280 contacts ATP.

Belongs to the SELO family. It depends on Mg(2+) as a cofactor. Requires Mn(2+) as cofactor.

The catalysed reaction is L-seryl-[protein] + ATP = 3-O-(5'-adenylyl)-L-seryl-[protein] + diphosphate. It carries out the reaction L-threonyl-[protein] + ATP = 3-O-(5'-adenylyl)-L-threonyl-[protein] + diphosphate. It catalyses the reaction L-tyrosyl-[protein] + ATP = O-(5'-adenylyl)-L-tyrosyl-[protein] + diphosphate. The enzyme catalyses L-histidyl-[protein] + UTP = N(tele)-(5'-uridylyl)-L-histidyl-[protein] + diphosphate. The catalysed reaction is L-seryl-[protein] + UTP = O-(5'-uridylyl)-L-seryl-[protein] + diphosphate. It carries out the reaction L-tyrosyl-[protein] + UTP = O-(5'-uridylyl)-L-tyrosyl-[protein] + diphosphate. Its function is as follows. Nucleotidyltransferase involved in the post-translational modification of proteins. It can catalyze the addition of adenosine monophosphate (AMP) or uridine monophosphate (UMP) to a protein, resulting in modifications known as AMPylation and UMPylation. In Burkholderia thailandensis (strain ATCC 700388 / DSM 13276 / CCUG 48851 / CIP 106301 / E264), this protein is Protein nucleotidyltransferase YdiU.